The sequence spans 380 residues: Beta sliding clamp (380 aa).

The protein belongs to the beta sliding clamp family. In terms of assembly, forms a ring-shaped head-to-tail homodimer around DNA which binds and tethers DNA polymerases and other proteins to the DNA. The DNA replisome complex has a single clamp-loading complex (3 tau and 1 each of delta, delta', psi and chi subunits) which binds 3 Pol III cores (1 core on the leading strand and 2 on the lagging strand) each with a beta sliding clamp dimer. Additional proteins in the replisome are other copies of gamma, psi and chi, Ssb, DNA helicase and RNA primase.

The protein localises to the cytoplasm. Functionally, confers DNA tethering and processivity to DNA polymerases and other proteins. Acts as a clamp, forming a ring around DNA (a reaction catalyzed by the clamp-loading complex) which diffuses in an ATP-independent manner freely and bidirectionally along dsDNA. Initially characterized for its ability to contact the catalytic subunit of DNA polymerase III (Pol III), a complex, multichain enzyme responsible for most of the replicative synthesis in bacteria; Pol III exhibits 3'-5' exonuclease proofreading activity. The beta chain is required for initiation of replication as well as for processivity of DNA replication. The chain is Beta sliding clamp (dnaN) from Halalkalibacterium halodurans (strain ATCC BAA-125 / DSM 18197 / FERM 7344 / JCM 9153 / C-125) (Bacillus halodurans).